The chain runs to 151 residues: UPF0178 protein mma_0312 (151 aa).

The protein belongs to the UPF0178 family.

This Janthinobacterium sp. (strain Marseille) (Minibacterium massiliensis) protein is UPF0178 protein mma_0312.